The chain runs to 123 residues: Large ribosomal subunit protein uL22 (123 aa).

The protein belongs to the universal ribosomal protein uL22 family. As to quaternary structure, part of the 50S ribosomal subunit.

In terms of biological role, this protein binds specifically to 23S rRNA; its binding is stimulated by other ribosomal proteins, e.g. L4, L17, and L20. It is important during the early stages of 50S assembly. It makes multiple contacts with different domains of the 23S rRNA in the assembled 50S subunit and ribosome. Its function is as follows. The globular domain of the protein is located near the polypeptide exit tunnel on the outside of the subunit, while an extended beta-hairpin is found that lines the wall of the exit tunnel in the center of the 70S ribosome. The protein is Large ribosomal subunit protein uL22 of Synechococcus sp. (strain JA-3-3Ab) (Cyanobacteria bacterium Yellowstone A-Prime).